Consider the following 361-residue polypeptide: Phosphate acyltransferase (361 aa).

It belongs to the PlsX family. As to quaternary structure, homodimer. Probably interacts with PlsY.

It localises to the cytoplasm. It catalyses the reaction a fatty acyl-[ACP] + phosphate = an acyl phosphate + holo-[ACP]. The protein operates within lipid metabolism; phospholipid metabolism. Its function is as follows. Catalyzes the reversible formation of acyl-phosphate (acyl-PO(4)) from acyl-[acyl-carrier-protein] (acyl-ACP). This enzyme utilizes acyl-ACP as fatty acyl donor, but not acyl-CoA. This chain is Phosphate acyltransferase, found in Parvibaculum lavamentivorans (strain DS-1 / DSM 13023 / NCIMB 13966).